Consider the following 165-residue polypeptide: Large ribosomal subunit protein uL11 (165 aa).

Belongs to the universal ribosomal protein uL11 family. Part of the ribosomal stalk of the 50S ribosomal subunit. Interacts with L10 and the large rRNA to form the base of the stalk. L10 forms an elongated spine to which L12 dimers bind in a sequential fashion forming a multimeric L10(L12)X complex.

Forms part of the ribosomal stalk which helps the ribosome interact with GTP-bound translation factors. This is Large ribosomal subunit protein uL11 from Thermococcus kodakarensis (strain ATCC BAA-918 / JCM 12380 / KOD1) (Pyrococcus kodakaraensis (strain KOD1)).